The sequence spans 320 residues: Putative membrane-bound redox modulator Alx (320 aa).

The Periplasmic segment spans residues 1-6 (MNTVGT). The chain crosses the membrane as a helical span at residues 7-27 (PLLWGGFAVVVAIMLAIDLLL). Over 28–43 (QGRRGAHAMTMKQAAA) the chain is Cytoplasmic. Residues 44-64 (WSLVWVTLSLLFNAAFWWYLV) form a helical membrane-spanning segment. The Periplasmic portion of the chain corresponds to 65–89 (QTEGRAVADPQALAFLTGYLIEKSL). A helical membrane pass occupies residues 90 to 110 (AVDNVFVWLMLFSYFSVPAAL). The Cytoplasmic segment spans residues 111–113 (QRR). Residues 114–134 (VLVYGVLGAIVLRTIMIFTGS) traverse the membrane as a helical segment. Position 135 (W135) is a topological domain, periplasmic. A helical transmembrane segment spans residues 136-156 (LISQFDWILYIFGAFLLFTGV). Residues 157-198 (KMALAHEDESGIGDKPLVRWLRGHLRMTDTIDNEHFFVRKNG) lie on the Cytoplasmic side of the membrane. The chain crosses the membrane as a helical span at residues 199–219 (LLYATPLMLVLILVELSDVIF). Residues 220–225 (AVDSIP) are Periplasmic-facing. A helical membrane pass occupies residues 226-246 (AIFAVTTDPFIVLTSNLFAIL). The Cytoplasmic segment spans residues 247-261 (GLRAMYFLLAGVAER). The helical transmembrane segment at 262–282 (FSMLKYGLAVILVFIGIKMLI) threads the bilayer. At 283–286 (VDFY) the chain is on the periplasmic side. A helical transmembrane segment spans residues 287–307 (HIPIAVSLGVVFGILVMTFII). Over 308–320 (NAWVNYRHDKQRG) the chain is Cytoplasmic.

This sequence belongs to the TerC family.

It is found in the cell inner membrane. Functionally, has been proposed to be a redox modulator. The polypeptide is Putative membrane-bound redox modulator Alx (alx) (Shigella flexneri).